A 334-amino-acid polypeptide reads, in one-letter code: Protein U17/U16 (334 aa).

This sequence belongs to the herpesviridae US22 family.

Isoform 3 can transactivate the human immunodeficiency virus type 1 promoter. This is Protein U17/U16 (U17/U16) from Human herpesvirus 6A (strain Uganda-1102) (HHV-6 variant A).